A 635-amino-acid polypeptide reads, in one-letter code: Threonine--tRNA ligase (635 aa).

Positions 1 to 61 (MTVVRLPDGT…ETDSDLVLIT (61 aa)) constitute a TGS domain. The interval 242–533 (DHRKLGKQLD…LIEHHAGALP (292 aa)) is catalytic. Zn(2+) is bound by residues Cys333, His384, and His510.

This sequence belongs to the class-II aminoacyl-tRNA synthetase family. In terms of assembly, homodimer. The cofactor is Zn(2+).

It localises to the cytoplasm. It carries out the reaction tRNA(Thr) + L-threonine + ATP = L-threonyl-tRNA(Thr) + AMP + diphosphate + H(+). Catalyzes the attachment of threonine to tRNA(Thr) in a two-step reaction: L-threonine is first activated by ATP to form Thr-AMP and then transferred to the acceptor end of tRNA(Thr). Also edits incorrectly charged L-seryl-tRNA(Thr). The sequence is that of Threonine--tRNA ligase from Nitrosomonas europaea (strain ATCC 19718 / CIP 103999 / KCTC 2705 / NBRC 14298).